The primary structure comprises 1045 residues: Protein phosphatase Slingshot (1045 aa).

Positions Met-1–Asp-20 are enriched in polar residues. 4 disordered regions span residues Met-1–Arg-35, Thr-58–Ser-80, Lys-143–Asn-194, and Glu-306–Glu-325. Over residues Thr-66–Ser-80 the composition is skewed to low complexity. The segment covering Gly-149–Ser-174 has biased composition (polar residues). Residues Ser-175–Asn-185 are compositionally biased toward basic and acidic residues. In terms of domain architecture, DEK-C spans Glu-324–Gly-379. The 142-residue stretch at Ala-383–Ala-524 folds into the Tyrosine-protein phosphatase domain. The active-site Phosphocysteine intermediate is the Cys-468. Positions Glu-529 to Arg-547 are enriched in basic and acidic residues. 3 disordered regions span residues Glu-529 to Ser-631, Ser-699 to Arg-799, and Ala-1001 to Ser-1045. Residues Ala-560–Thr-569 show a composition bias toward polar residues. Basic residues predominate over residues Met-586–Arg-601. The segment covering Arg-602–Asn-625 has biased composition (polar residues). Positions Ser-704–Ile-713 are enriched in low complexity. Position 719 is a phosphoserine (Ser-719). Over residues Cys-721 to Val-732 the composition is skewed to low complexity. Polar residues-rich tracts occupy residues Thr-764–Ala-774 and Lys-1008–Val-1021. Low complexity predominate over residues Ser-1029–Ser-1045.

This sequence belongs to the protein-tyrosine phosphatase family. Interacts with actin.

It localises to the cytoplasm. The protein resides in the cytoskeleton. It catalyses the reaction O-phospho-L-tyrosyl-[protein] + H2O = L-tyrosyl-[protein] + phosphate. It carries out the reaction O-phospho-L-seryl-[protein] + H2O = L-seryl-[protein] + phosphate. The enzyme catalyses O-phospho-L-threonyl-[protein] + H2O = L-threonyl-[protein] + phosphate. Functionally, protein phosphatase which regulates actin filament dynamics. Dephosphorylates and activates the actin binding/depolymerizing factor tsr/cofilin, which subsequently binds to actin filaments and stimulates their disassembly. Required for axon growth. The sequence is that of Protein phosphatase Slingshot (ssh) from Drosophila melanogaster (Fruit fly).